A 158-amino-acid chain; its full sequence is Large ribosomal subunit protein uL11 (158 aa).

It belongs to the universal ribosomal protein uL11 family. Part of the ribosomal stalk of the 50S ribosomal subunit. Interacts with L10 and the large rRNA to form the base of the stalk. L10 forms an elongated spine to which L12 dimers bind in a sequential fashion forming a multimeric L10(L12)X complex.

Forms part of the ribosomal stalk which helps the ribosome interact with GTP-bound translation factors. The protein is Large ribosomal subunit protein uL11 of Methanoregula boonei (strain DSM 21154 / JCM 14090 / 6A8).